The sequence spans 490 residues: GTPase Der (490 aa).

EngA-type G domains are found at residues 1-165 (MRIA…QIPV) and 227-400 (LKVA…TIAT). Residues 7 to 14 (GRPNVGKS), 54 to 58 (DTGGV), 117 to 120 (NKAD), 233 to 240 (GHPNVGKS), 280 to 284 (DTAGL), and 345 to 348 (NKWD) contribute to the GTP site. The KH-like domain occupies 401–485 (TKLSTSLVNK…PFDLEYKAKP (85 aa)).

The protein belongs to the TRAFAC class TrmE-Era-EngA-EngB-Septin-like GTPase superfamily. EngA (Der) GTPase family. Associates with the 50S ribosomal subunit.

GTPase that plays an essential role in the late steps of ribosome biogenesis. This chain is GTPase Der, found in Chlamydia trachomatis serovar A (strain ATCC VR-571B / DSM 19440 / HAR-13).